We begin with the raw amino-acid sequence, 316 residues long: Probable cell division protein WhiA (316 aa).

The H-T-H motif DNA-binding region spans S274 to N308.

It belongs to the WhiA family.

Functionally, involved in cell division and chromosome segregation. In Macrococcus caseolyticus (strain JCSC5402) (Macrococcoides caseolyticum), this protein is Probable cell division protein WhiA.